The primary structure comprises 38 residues: uncharacterized protein (38 aa).

Residues 10 to 32 (FSLLWYFLVGGGKGEVCWRFLGI) traverse the membrane as a helical segment.

The protein resides in the membrane. This is an uncharacterized protein from Saccharomyces cerevisiae (strain ATCC 204508 / S288c) (Baker's yeast).